The following is a 118-amino-acid chain: uncharacterized protein (118 aa).

This is an uncharacterized protein from Rickettsia prowazekii (strain Madrid E).